A 711-amino-acid polypeptide reads, in one-letter code: MLQSMGDGEISISPYDTAWVALVEDDGGGRRQPQFPSSLEWISSNQLADGSWGDAGTFSIFDRILNTLACVVALRSWNIHPHKTEKGIWFMKKNMCRIDEENLEHMPIGFEVALPSLIDIAKKLGIDIPTQTRGLQEIYARREIKLKKIPRDIMHQAPTTLLHSLEGMAGLKWEKLLKLQSEDGSFLFSPASTAFALQQTRDHNCLKYLTNHIHKFNGGVPNVYPVDLFEHLWAVDRLQRLGLSRYFEPEIEECIAYVHRQWTEKGICWARNSQVEDIDDTAMGFRLLRLHGYEVSADVFRHFKSDGGEFFCFKGQSTQAVTGMYNLYRASQLMFPGENILVDAARFSANFLQLKRANNDLFDKWIITKDLPGEVGYALDVPWYASLPRVETRFYLDQYGGDDDVWIGKTLYRMPYVNNNKYLELAKLDYNNCQALHQQEWQNIQKWYRSCSLGEFGMTERSLLQTYYVAAASVFEPEKSQERLAWAKTAILMETITSHFEFQQLSRDQKRAFITEFEHDSILKYTNGGRYKRRSSLVGTLVRTLNHLSLDILLAHGRDIHQPLKNAWCKWLNSWEEGGDAELLVRTLNLMISGGGRRRRWASEELLSSNPKHEQLLKATIGVCDKLRLFQRRKVQGGNGCMNATGITTVEIESEMRELVKLVVTRSSSEDLDSEIKQNFLTIARSFYYAAYCNQGTINFHIAKVLFEKVL.

Lys-145 provides a ligand contact to substrate. Positions 277 and 279 each coordinate Mg(2+). A DXDD motif motif is present at residues 277-280 (DIDD). Lys-364 contacts substrate.

Belongs to the terpene synthase family. Tpsc subfamily. The cofactor is Mg(2+).

It catalyses the reaction (2E,6E,10E)-geranylgeranyl diphosphate = ent-copalyl diphosphate. Its pathway is secondary metabolite biosynthesis; terpenoid biosynthesis. Involved in the biosynthesis of ent-kaurene diterpenoids natural products such as oridonin, miltiradiene, eriocalyxin B and nezukol, known to exhibit antitumor, anti-inflammatory and antibacterial activities. Catalyzes the conversion of (2E,6E,10E)-geranylgeranyl diphosphate (GGPP) to ent-copalyl diphosphate (ent-CPP). This is Ent-copalyl diphosphate synthase 1 from Isodon japonicus (Scutellaria japonica).